The following is a 524-amino-acid chain: MNNQKTFKGLRLAALGLVAVAAFTAGCSDVSTELKTPVYKTKLTAEEIRNSAFKPEFPKQYASYERNDETTVMTEYKGSVPFNKNDNVNPLPEGYRHAQPYLKNLWLGYPFMYEYREARGHTYAIQDFLHIDRINRYAEKGGLPATCWNCKTPKMMEWVKESGDGFWAKDVNEFRDKIDMKDHTIGCATCHDPQTMELRITSVPLTDYLVSQGKDPKKLPRNEMRALVCGQCHVEYYFNGPTMGVNKKPVFPWAEGFDPADMYRYYDKHGDLQVKGFEGKFADWTHPASKTPMIKAQHPEYETWINGTHGAAGVTCADCHMSYTRSDDKKKISSHWWTSPMKDPEMRACRQCHSDKTPDYLKSRVLFTQKRTFDLLLAAQEVSVKAHEAVRLANEYQGAKAAGYDDLMIQAREMVRKGQFFWDYVSAENSVGFHNPAKALDTLAQSQQFSQKAIDLAMEATQYGIGKDLSGDIKTIVPPILKMNRKLQQDPEFMKTHKWFQYLPVLPKADQVWDGQKRLVSAKQ.

The first 24 residues, 1-24 (MNNQKTFKGLRLAALGLVAVAAFT), serve as a signal peptide directing secretion. Residues 29–39 (DVSTELKTPVY) are interaction with NrfH. Ca(2+)-binding residues include Gly-78, Glu-117, and Ala-118. Residues His-121, Cys-147, Cys-150, Lys-151, Cys-187, Cys-190, and His-191 each coordinate heme. The tract at residues 221-222 (RN) is interaction with NrfH. 3 residues coordinate heme: Cys-229, Cys-232, and His-233. The Ca(2+) site is built by Glu-235, Tyr-236, Lys-295, and Gln-297. Residues His-309, Cys-316, Cys-319, His-320, His-335, Cys-349, Cys-352, His-353, and His-434 each contribute to the heme site. Positions 318 to 331 (DCHMSYTRSDDKKK) are interaction with NrfH. Positions 351–355 (QCHSD) are interaction with NrfH.

The protein belongs to the cytochrome c-552 family. Component of the NrfHA cytochrome c nitrite reductase complex composed of 4 NrfA catalytic subunits and 2 NrfH quinone-binding subunits. NrfA homodimer interacts with NrfH. Requires Ca(2+) as cofactor. Heme serves as cofactor.

Its subcellular location is the cell inner membrane. The catalysed reaction is 6 Fe(III)-[cytochrome c] + NH4(+) + 2 H2O = 6 Fe(II)-[cytochrome c] + nitrite + 8 H(+). Functionally, catalytic subunit of the cytochrome c nitrite reductase holocomplex NrfHA. Has both nitrite and sulfite reductase activities. Catalyzes the reduction of nitrite to ammonia, consuming six electrons acquired by the electron donor subunit NrfH from the menaquinone pool, in an anaerobic respiratory process of nitrite. The other biological function of the NrfHA holocomplex is to detoxify nitrite. This function is essential for the survival of this organism as it enables it to overcome inhibition by nitrite, which is produced by other organisms living in the same environment. The polypeptide is Cytochrome c nitrite reductase subunit NrfA (Nitratidesulfovibrio vulgaris (strain ATCC 29579 / DSM 644 / CCUG 34227 / NCIMB 8303 / VKM B-1760 / Hildenborough) (Desulfovibrio vulgaris)).